Here is a 212-residue protein sequence, read N- to C-terminus: Protein DEPP1 (212 aa).

Disordered regions lie at residues 20 to 39 (EEML…SLDD), 49 to 79 (QPTS…GRPA), and 113 to 176 (QEKQ…SDLR). Residues 113–124 (QEKQPSQRDLPR) are compositionally biased toward basic and acidic residues.

Expressed in various tissues, including pancreas, placenta, ovary, testis and kidney.

It is found in the cytoplasm. The protein localises to the peroxisome. It localises to the mitochondrion. In terms of biological role, acts as a critical modulator of FOXO3-induced autophagy via increased cellular ROS. The sequence is that of Protein DEPP1 from Homo sapiens (Human).